Here is a 1840-residue protein sequence, read N- to C-terminus: Neurexin 1 (1840 aa).

The segment at 1–50 (MKAPHSATYQDNYADAAMTARTRPSMDMDQQRNRNQAELRLLPAQRTSTS) is disordered. The Extracellular portion of the chain corresponds to 1–1696 (MKAPHSATYQ…NSIEEERTAM (1696 aa)). The span at 24–37 (PSMDMDQQRNRNQA) shows a compositional bias: basic and acidic residues. A Laminin G-like 1 domain is found at 104 to 289 (GFQLDGSQNS…RDIKCGDVPC (186 aa)). The EGF-like 1 domain occupies 309–347 (TTDACERNDPCQHGGICISTDSGPICECRNLEYDGQYCE). Disulfide bonds link C313–C325, C319–C334, C336–C346, C511–C547, C710–C739, C746–C757, C751–C766, and C768–C778. Laminin G-like domains lie at 352-547 (PSEA…EYQC) and 554-739 (DPVT…KPSC). Positions 742–779 (QANVCNGNPCLNGGTCLEGWNRPICDCSATLYGGPTCG) constitute an EGF-like 2 domain. Laminin G-like domains follow at residues 784–964 (TLAF…LPSA) and 982–1158 (HAAT…VSGC). Disulfide bonds link C1130–C1158, C1164–C1175, C1169–C1184, and C1186–C1196. Residues 1160–1197 (GPTKCSQNACANRGNCVQQWNAYACECDMTSYTGPTCY) form the EGF-like 3 domain. Positions 1201-1416 (IAYEFGNNKG…LIFSGAGSGC (216 aa)) constitute a Laminin G-like 6 domain. The interval 1411-1651 (GAGSGCRGDD…DEHHPLPPLP (241 aa)) is disordered. The span at 1447-1472 (QTTTSQQGNSLSTGGSSSGGVITNGT) shows a compositional bias: low complexity. Polar residues predominate over residues 1491-1527 (TTEQFTSTSTARGSESNNEMVTITTTGRSDVTTEQHQ). The segment covering 1528-1600 (GSSSSSSSGS…TTTTTTTTQA (73 aa)) has biased composition (low complexity). Positions 1632-1646 (RNDHDRMQLPDEHHP) are enriched in basic and acidic residues. Residues 1697-1717 (IIGIVAGILIAVVLVILLVLW) form a helical membrane-spanning segment. Topologically, residues 1718-1840 (LKSNGDRGYK…DSKDVKEWYV (123 aa)) are cytoplasmic. A disordered region spans residues 1737 to 1840 (GSHNPNAALL…DSKDVKEWYV (104 aa)). The segment covering 1747-1757 (GNTSTNGSYHQ) has biased composition (polar residues). The segment covering 1774 to 1787 (QQQHHAQQQMHNGH) has biased composition (low complexity). Residues 1788-1813 (NGNGNGGGGGGGGMMSSGSGSLGYGS) show a composition bias toward gly residues. Residues D1831 and D1834 each contribute to the Zn(2+) site. The span at 1831 to 1840 (DSKDVKEWYV) shows a compositional bias: basic and acidic residues. A PDZ domain binding motif is present at residues 1837–1840 (EWYV).

Belongs to the neurexin family. As to quaternary structure, interacts (via C-terminal PDZ binding motif) with CASK (via PDZ domain). Interacts (via cytoplasmic domain) with apolpp/ApoLI; the interaction supports apolpp/ApoLI protein stability. Interact (via cytoplasmic domain) with Spn/Spinophilin. Interacts with RhoGAP100F/Syd-1 (via PDZ domain); RhoGAP100F/Syd-1 may recruit Nrx-1 to the presynaptic active zone. As to expression, expressed in brain, with expression in medulla, lamina, lobula, lobula plate, mushroom body and antennal lobe, and in retina (at protein level). Expressed in rabdomere of photoreceptor cells (at protein level).

The protein resides in the synaptic cell membrane. Its subcellular location is the presynaptic cell membrane. The protein localises to the postsynaptic cell membrane. Functionally, neuronal cell adhesion protein involved in synapse formation, development of synaptic active zones, synaptic regulation and visual function. Plays a role in cell adhesion between the pre- and the postsynaptic cell. Required for proper proliferation of synaptic boutons during larval development, a process necessary for coordinated matching of pre-and postsynaptic compartments. Promotes presynaptic active zone formation and neurotransmitter release. Spn/Spinophilin fine-tunes nrx-1/nlg1 signaling at the pre-synapse to control active zone number and functionality and thereby optimizing action potential-induced exocytosis. Required for synapse formation in central nervous system. By regulating synapse formation, may play a role in larval associative learning. Together with RhoGAP100F/syd-1, controls synapse formation at the neuromuscular junction. Essential for synaptic vesicle cycling, which plays critical roles in neurotransmission at neuromuscular junctions (NMJ). Regulated and restricts formation of glutamate receptor clusters. Mediates retinoid transport and subsequent rhodopsin maturation and may regulate lipoprotein function; thereby playing a role in vision. Regulates sleep, circadian rhythm and synaptic plasticity. Together with CASK, required for locomotion. This Drosophila melanogaster (Fruit fly) protein is Neurexin 1.